Reading from the N-terminus, the 295-residue chain is Protoheme IX farnesyltransferase (295 aa).

Helical transmembrane passes span 27–46, 50–72, 93–115, 119–136, 148–168, 175–195, 219–239, 244–264, and 275–295; these read IMYL…PGSI, IAII…NMWY, ISKS…VMMI, YISG…SFAY, IVIG…SVTS, LILF…LSLL, VHIL…GLFL, LYEI…FKVF, and MFTY…LASF.

The protein belongs to the UbiA prenyltransferase family. Protoheme IX farnesyltransferase subfamily.

It is found in the cell inner membrane. It catalyses the reaction heme b + (2E,6E)-farnesyl diphosphate + H2O = Fe(II)-heme o + diphosphate. It functions in the pathway porphyrin-containing compound metabolism; heme O biosynthesis; heme O from protoheme: step 1/1. Converts heme B (protoheme IX) to heme O by substitution of the vinyl group on carbon 2 of heme B porphyrin ring with a hydroxyethyl farnesyl side group. The protein is Protoheme IX farnesyltransferase of Ehrlichia canis (strain Jake).